Reading from the N-terminus, the 528-residue chain is Protein spinster homolog 1 (528 aa).

Residues 1–44 form a disordered region; sequence MSGSDTAPFLSQADDTDDGPAPGTPGLPGSMGNPKSEDPAVPDQ. 12 helical membrane-spanning segments follow: residues 50-70, 98-118, 126-146, 160-180, 187-207, 218-238, 278-298, 323-343, 357-377, 381-401, 421-441, and 465-485; these read ITGL…YINL, GLIQ…FGYL, YLMC…SFIP, VGVG…DLFV, MLSV…IAGS, WALR…FLVV, LGFT…PAFL, LIFG…GVEI, LVCA…LACA, IVAT…NWAI, FQIV…IGSI, and MLCA…AIFI. Phosphoserine is present on Ser518.

Belongs to the major facilitator superfamily. Spinster (TC 2.A.1.49) family. As to quaternary structure, interacts with BCL2 and BCL2L1.

Its subcellular location is the lysosome membrane. The catalysed reaction is a 1-acyl-sn-glycero-3-phosphocholine(out) + H(+)(out) = a 1-acyl-sn-glycero-3-phosphocholine(in) + H(+)(in). It carries out the reaction 1-hexadecanoyl-sn-glycero-3-phosphocholine(out) + H(+)(out) = 1-hexadecanoyl-sn-glycero-3-phosphocholine(in) + H(+)(in). The enzyme catalyses 1-(9Z-octadecenoyl)-sn-glycero-3-phosphocholine(out) + H(+)(out) = 1-(9Z-octadecenoyl)-sn-glycero-3-phosphocholine(in) + H(+)(in). It catalyses the reaction 1-(5Z,8Z,11Z,14Z-eicosatetraenoyl)-sn-glycero-3-phosphocholine(out) + H(+)(out) = 1-(5Z,8Z,11Z,14Z-eicosatetraenoyl)-sn-glycero-3-phosphocholine(in) + H(+)(in). The catalysed reaction is 1-(4Z,7Z,10Z,13Z,16Z,19Z-docosahexaenoyl)-sn-glycero-3-phosphocholine(out) + H(+)(out) = 1-(4Z,7Z,10Z,13Z,16Z,19Z-docosahexaenoyl)-sn-glycero-3-phosphocholine(in) + H(+)(in). It carries out the reaction a 1-acyl-sn-glycero-3-phosphoethanolamine(out) + H(+)(out) = a 1-acyl-sn-glycero-3-phosphoethanolamine(in) + H(+)(in). The enzyme catalyses 1-(9Z-octadecenoyl)-sn-glycero-3-phosphoethanolamine(out) + H(+)(out) = 1-(9Z-octadecenoyl)-sn-glycero-3-phosphoethanolamine(in) + H(+)(in). It catalyses the reaction 1-acyl-sn-glycero-3-phospho-(1'-sn-glycerol)(out) + H(+)(out) = 1-acyl-sn-glycero-3-phospho-(1'-sn-glycerol)(in) + H(+)(in). The catalysed reaction is 1-(9Z-octadecenoyl)-sn-glycero-3-phospho-(1'-sn-glycerol)(out) + H(+)(out) = 1-(9Z-octadecenoyl)-sn-glycero-3-phospho-(1'-sn-glycerol)(in) + H(+)(in). It carries out the reaction a 1-O-(1Z-alkenyl)-sn-glycero-3-phosphocholine(out) + H(+)(out) = a 1-O-(1Z-alkenyl)-sn-glycero-3-phosphocholine(in) + H(+)(in). The enzyme catalyses 1-(1Z-hexadecenyl)-sn-glycero-3-phosphocholine(out) + H(+)(out) = 1-(1Z-hexadecenyl)-sn-glycero-3-phosphocholine(in) + H(+)(in). It catalyses the reaction a 1-O-(1Z-alkenyl)-sn-glycero-3-phosphoethanolamine(out) + H(+)(out) = a 1-O-(1Z-alkenyl)-sn-glycero-3-phosphoethanolamine(in) + H(+)(in). The catalysed reaction is 1-O-(1Z-hexadecenyl)-sn-glycero-3-phosphoethanolamine(out) + H(+)(out) = 1-O-(1Z-hexadecenyl)-sn-glycero-3-phosphoethanolamine(in) + H(+)(in). Its function is as follows. Plays a critical role in the phospholipid salvage pathway from lysosomes to the cytosol. Mediates the rate-limiting, proton-dependent, lysosomal efflux of lysophospholipids, which can then be reacylated by acyltransferases in the endoplasmic reticulum to form phospholipids. Selective for zwitterionic headgroups such as lysophosphatidylcholine (LPC) and lysophosphatidylethanolamine (LPE), can also transport lysophosphatidylglycerol (LPG), but not other anionic lysophospholipids, sphingosine, nor sphingomyelin. Transports lysophospholipids with saturated, monounsaturated, and polyunsaturated fatty acids, such as 1-hexadecanoyl-sn-glycero-3-phosphocholine, 1-(9Z-octadecenoyl)-sn-glycero-3-phosphocholine and 1-(4Z,7Z,10Z,13Z,16Z,19Z-docosahexaenoyl)-sn-glycero-3-phosphocholine, respectively. Can also transport lysoplasmalogen (LPC with a fatty alcohol) such as 1-(1Z-hexadecenyl)-sn-glycero-3-phosphocholine. Essential player in lysosomal homeostasis. Crucial for cell survival under conditions of nutrient limitation. May be involved in necrotic or autophagic cell death. The protein is Protein spinster homolog 1 (SPNS1) of Bos taurus (Bovine).